The primary structure comprises 146 residues: Anti-sigma F factor (146 aa).

It belongs to the anti-sigma-factor family.

It carries out the reaction L-seryl-[protein] + ATP = O-phospho-L-seryl-[protein] + ADP + H(+). The catalysed reaction is L-threonyl-[protein] + ATP = O-phospho-L-threonyl-[protein] + ADP + H(+). Its function is as follows. Binds to sigma F and blocks its ability to form an RNA polymerase holoenzyme (E-sigma F). Phosphorylates SpoIIAA on a serine residue. This phosphorylation may enable SpoIIAA to act as an anti-anti-sigma factor that counteracts SpoIIAB and thus releases sigma F from inhibition. This chain is Anti-sigma F factor, found in Bacillus cereus (strain G9842).